Reading from the N-terminus, the 236-residue chain is MRVDLQPAYILHARPYRDTSLLLDLLTPVYGRITAVARGVRQSKGHKRQLLNPFHRLLVNWQGKSELKLITGVETDHHYLQLQGNALYSGFYLNELLVRLLPEQDVITGLFERYEWTLDALHRGEPLEPLLREFEFMLLQGLGYALDFLHDCHSQQPIQSGYFYLCDIHQGFYSVPADSDPRFWIAGAHLLAIAAGDYSAADTRRVAKQLARLLFKPLLGKRPLKSRELFTPGSPH.

The protein belongs to the RecO family.

Involved in DNA repair and RecF pathway recombination. The protein is DNA repair protein RecO of Cellvibrio japonicus (strain Ueda107) (Pseudomonas fluorescens subsp. cellulosa).